A 332-amino-acid chain; its full sequence is MSKIGINGFGRIGRLVLRAAIDKGASVVAVNDPFIDVNYMVYLFKFDSTHGRFKGTVAAEGGFLVVNGQKITVFSERDPANINWASAGAEYVVESTGVFTTIDKASTHLKGGAKKVIISAPSADAPMFVCGVNLDAYSPDMKVVSNASCTTNCLAPLAKVINDNFEIVEGLMTTVHATTATQKTVDGPSGKLWRDGRGAAQNIIPAATGAAKAVGKVIPALNGKLTGMAFRVPTPNVSVVDLTVRLGKGATYDEIKAKVEEASKGPLKGILGYTDEEVVSTDFFSDTHSSVFDAKAGISLNDKFVKLISWYDNEFGYSNRVIDLIKYMQSKD.

Residues Arg-11 to Ile-12, Asp-32, and Arg-77 contribute to the NAD(+) site. D-glyceraldehyde 3-phosphate is bound by residues Ser-148 to Thr-150, Thr-179, Thr-208 to Gly-209, and Arg-231. Cys-149 (nucleophile) is an active-site residue. Asn-313 lines the NAD(+) pocket.

The protein belongs to the glyceraldehyde-3-phosphate dehydrogenase family. Homotetramer.

It localises to the cytoplasm. It catalyses the reaction D-glyceraldehyde 3-phosphate + phosphate + NAD(+) = (2R)-3-phospho-glyceroyl phosphate + NADH + H(+). Its pathway is carbohydrate degradation; glycolysis; pyruvate from D-glyceraldehyde 3-phosphate: step 1/5. This is Glyceraldehyde-3-phosphate dehydrogenase 1 (Gapdh1) from Drosophila melanogaster (Fruit fly).